Here is a 509-residue protein sequence, read N- to C-terminus: UDP-N-acetylmuramoyl-L-alanyl-D-glutamate--2,6-diaminopimelate ligase (509 aa).

S30 is a UDP-N-acetyl-alpha-D-muramoyl-L-alanyl-D-glutamate binding site. ATP is bound at residue G110 to T116. UDP-N-acetyl-alpha-D-muramoyl-L-alanyl-D-glutamate is bound by residues T152 to T153, S179, Q185, and R187. At K219 the chain carries N6-carboxylysine. Residues R385, D409–R412, G476, and E480 each bind meso-2,6-diaminopimelate. The Meso-diaminopimelate recognition motif motif lies at D409–R412.

Belongs to the MurCDEF family. MurE subfamily. Mg(2+) serves as cofactor. In terms of processing, carboxylation is probably crucial for Mg(2+) binding and, consequently, for the gamma-phosphate positioning of ATP.

It localises to the cytoplasm. The catalysed reaction is UDP-N-acetyl-alpha-D-muramoyl-L-alanyl-D-glutamate + meso-2,6-diaminopimelate + ATP = UDP-N-acetyl-alpha-D-muramoyl-L-alanyl-gamma-D-glutamyl-meso-2,6-diaminopimelate + ADP + phosphate + H(+). It participates in cell wall biogenesis; peptidoglycan biosynthesis. Catalyzes the addition of meso-diaminopimelic acid to the nucleotide precursor UDP-N-acetylmuramoyl-L-alanyl-D-glutamate (UMAG) in the biosynthesis of bacterial cell-wall peptidoglycan. The chain is UDP-N-acetylmuramoyl-L-alanyl-D-glutamate--2,6-diaminopimelate ligase from Geobacter sulfurreducens (strain ATCC 51573 / DSM 12127 / PCA).